A 480-amino-acid polypeptide reads, in one-letter code: Probable histone deacetylase 1-B (480 aa).

Positions 10 to 321 are histone deacetylase; the sequence is KVCYYYDGDV…WTYETAVALD (312 aa). Residue His-141 is part of the active site. The interval 387–480 is disordered; that stretch reads DSVHDDSGEE…KRVKEETKSV (94 aa). The segment covering 401–416 has biased composition (basic and acidic residues); the sequence is PDKRISIRSSDKRIAC. Residues 417–427 show a composition bias toward acidic residues; the sequence is DEEFSDSEDEG. The segment covering 443-480 has biased composition (basic and acidic residues); the sequence is VKTEEEKEGEDKKDVKEEEKAKDEKTDSKRVKEETKSV.

It belongs to the histone deacetylase family. HD type 1 subfamily. As to quaternary structure, found in a large complex with RBBP4 and MI-2.

It localises to the nucleus. Its subcellular location is the cytoplasm. The enzyme catalyses N(6)-acetyl-L-lysyl-[histone] + H2O = L-lysyl-[histone] + acetate. The catalysed reaction is N(6)-acetyl-L-lysyl-[protein] + H2O = L-lysyl-[protein] + acetate. It catalyses the reaction N(6)-(2E)-butenoyl-L-lysyl-[protein] + H2O = (2E)-2-butenoate + L-lysyl-[protein]. Functionally, histone deacetylase that catalyzes the deacetylation of lysine residues on the N-terminal part of the core histones (H2A, H2B, H3 and H4). Histone deacetylation gives a tag for epigenetic repression and plays an important role in transcriptional regulation, cell cycle progression and developmental events. Histone deacetylases act via the formation of large multiprotein complexes. Also functions as a deacetylase for non-histone proteins. In addition to protein deacetylase activity, also has protein-lysine deacylase activity: acts as a protein decrotonylase by mediating decrotonylation ((2E)-butenoyl) of histones. This chain is Probable histone deacetylase 1-B (hdac1-b), found in Xenopus laevis (African clawed frog).